We begin with the raw amino-acid sequence, 701 residues long: Lutropin-choriogonadotropic hormone receptor (701 aa).

Residues 1 to 26 (MGRPSLALRLLLALLLLPPPAPLLWA) form the signal peptide. Topologically, residues 27–365 (LRPAPCPEPC…EDIMGYNFLR (339 aa)) are extracellular. N101 carries N-linked (GlcNAc...) asparagine glycosylation. LRR repeat units lie at residues 124–149 (LPRLKYLSICNTGIHKLPDVTKIFSS), 151–173 (FNFILEICDNLHITTIPRNAFQG), 174–198 (MNNESITLKLYGNGFEEIQSHAFNG), 200–222 (TLISLELKENARLEKMHNDAFRG), 223–246 (ATGPSILDISSTKLQALPTYGLES), and 250–271 (LIATSSYSLKKLPSREKFTNLL). N-linked (GlcNAc...) asparagine glycosylation is found at N176 and N197. N-linked (GlcNAc...) asparagine glycans are attached at residues N293, N301, and N315. Position 333 is a sulfotyrosine (Y333). Residues 366–387 (VLIWLINILAITGNVTVLFVLL) form a helical membrane-spanning segment. Topologically, residues 388 to 397 (TSRYKLTVPR) are cytoplasmic. Residues 398–418 (FLMCNLSFADFCMGLYLLLIA) form a helical membrane-spanning segment. Residues 419 to 441 (SVDAQTKGQYYNHAIDWQTGSGC) are Extracellular-facing. Cysteines 441 and 516 form a disulfide. Residues 442–464 (SAAGFFTVFASELSVYTLTVITL) traverse the membrane as a helical segment. Topologically, residues 465–484 (ERWHTITYAIQLDQKLRLKH) are cytoplasmic. A helical membrane pass occupies residues 485 to 507 (AIPVMLGGWLFSTLIAVLPLVGV). Topologically, residues 508-527 (SNYMKVSICLPMDVESTLSQ) are extracellular. The chain crosses the membrane as a helical span at residues 528–551 (VYILTILILNVMAFIIICACYIKI). At 552 to 572 (YFAVQNPELMATNKDTKIAKK) the chain is on the cytoplasmic side. Residues 573–596 (MAVLIFTDFTCMAPISFFAISAAF) traverse the membrane as a helical segment. Topologically, residues 597–607 (KVPLITVTNSK) are extracellular. The chain crosses the membrane as a helical span at residues 608–629 (VLLVLFYPVNSCANPFLYAIFT). Over 630–701 (KAFQRDFFLL…VLDKTCYKEC (72 aa)) the chain is Cytoplasmic. Residues C645 and C646 are each lipidated (S-palmitoyl cysteine).

Belongs to the G-protein coupled receptor 1 family. FSH/LSH/TSH subfamily. Post-translationally, sulfated.

The protein resides in the cell membrane. Functionally, receptor for lutropin-choriogonadotropic hormone. The activity of this receptor is mediated by G proteins which activate adenylate cyclase. The polypeptide is Lutropin-choriogonadotropic hormone receptor (LHCGR) (Bos taurus (Bovine)).